The chain runs to 796 residues: YY1-associated protein 1 (796 aa).

Disordered stretches follow at residues 1–45 and 463–488; these read MEEE…ATPS and IQPSPSLQPSFNPGKTPAQSTHSEAP. The segment covering 23 to 36 has biased composition (basic and acidic residues); sequence PPDKREGSAVDPGK. Low complexity predominate over residues 463-472; sequence IQPSPSLQPS. Residues 473-485 show a composition bias toward polar residues; it reads FNPGKTPAQSTHS. The residue at position 724 (S724) is a Phosphoserine. The segment at 755 to 776 is disordered; it reads RQALEPLPQGIQESLNNSSPGD. Polar residues predominate over residues 765–774; sequence IQESLNNSSP.

As to quaternary structure, interacts with YY1. Interacts with MAD2L2. Interacts with INO80. In terms of tissue distribution, ubiquitous. Detected in small intestine, skeletal muscle, lung, pancreas, brain, stomach, spleen, colon and heart. Detected at very low levels in healthy liver. Highly expressed in most liver carcinomas.

It is found in the cytoplasm. Its subcellular location is the nucleus. The protein localises to the nucleoplasm. It localises to the nucleolus. Its function is as follows. Associates with the INO80 chromatin remodeling complex, which is responsible for transcriptional regulation, DNA repair, and replication. Enhances transcription activation by YY1. Plays a role in cell cycle regulation. This is YY1-associated protein 1 from Homo sapiens (Human).